Consider the following 90-residue polypeptide: Progonadoliberin-3 (90 aa).

The signal sequence occupies residues 1 to 23 (MEAGSRVIMQVLLLALVVQVTLS). Gln24 carries the post-translational modification Pyrrolidone carboxylic acid. Gly33 carries the post-translational modification Glycine amide.

The protein belongs to the GnRH family. Expressed only in the terminal nerve nucleus of the telencephalon.

The protein resides in the secreted. Functionally, stimulates the secretion of gonadotropins. The sequence is that of Progonadoliberin-3 (gnrh3) from Haplochromis burtoni (Burton's mouthbrooder).